We begin with the raw amino-acid sequence, 173 residues long: ATP-dependent protease subunit HslV (173 aa).

The active site involves Thr2. Gly157, Cys160, and Thr163 together coordinate Na(+).

This sequence belongs to the peptidase T1B family. HslV subfamily. As to quaternary structure, a double ring-shaped homohexamer of HslV is capped on each side by a ring-shaped HslU homohexamer. The assembly of the HslU/HslV complex is dependent on binding of ATP.

Its subcellular location is the cytoplasm. The enzyme catalyses ATP-dependent cleavage of peptide bonds with broad specificity.. Allosterically activated by HslU binding. Protease subunit of a proteasome-like degradation complex believed to be a general protein degrading machinery. The protein is ATP-dependent protease subunit HslV of Nitrosomonas eutropha (strain DSM 101675 / C91 / Nm57).